Consider the following 476-residue polypeptide: Transcription factor EB (476 aa).

Disordered stretches follow at residues 1–66 (MASR…PPVP) and 107–142 (HISPAQGSPKPPPAASPGVRAGHVLSSSAGNSAPNS). Residues 1–167 (MASRIGLRMQ…DDVIDNIMRL (167 aa)) are interaction with ACSS2. Low complexity predominate over residues 26 to 44 (QQQAVMHYMQQQQQQQQQQ). 4 positions are modified to phosphoserine: Ser109, Ser114, Ser122, and Ser138. Residues 132-142 (SSSAGNSAPNS) are compositionally biased toward low complexity. Residues 136 to 153 (GNSAPNSPMAMLHIGSNP) carry the Nuclear export signal motif. A Phosphoserine; by MTOR modification is found at Ser142. The tract at residues 156–165 (ELDDVIDNIM) is strong transcription activation domain. Thr183 is modified (phosphothreonine). Ser211 carries the phosphoserine; by MTOR modification. At Cys212 the chain carries S-(2,3-dicarboxypropyl)cysteine. The bHLH domain maps to 235–288 (QKKDNHNLIERRRRFNINDRIKELGMLIPKANDLDVRWNKGTILKASVDYIRRM). The Nuclear localization signal motif lies at 245 to 248 (RRRR). The interval 298 to 319 (LENHSRRLEMTNKQLWLRIQEL) is leucine-zipper. Position 332 is a phosphoserine (Ser332). Residues 349-430 (ELPSEEGPGE…HGSPFPSLSK (82 aa)) are disordered. Residues 369-390 (PEPLPALPPQAPLPLPTQPPSP) show a composition bias toward pro residues. Residues Ser423, Ser441, Ser466, Ser467, and Ser469 each carry the phosphoserine modification. Residues 447–469 (SDPLLSTMSPEASKASSRRSSFS) are compositionally biased toward low complexity. A disordered region spans residues 447–476 (SDPLLSTMSPEASKASSRRSSFSMEEGDVL).

The protein belongs to the MiT/TFE family. In terms of assembly, homodimer and heterodimer; with TFE3 or MITF. Interacts (when phosphorylated by MTOR) with YWHAZ; promoting retention in the cytosol. Interacts with IRGM; promoting association between TFEB and PPP3CB and dephosphorylation. Interacts with small GTPases Rag (RagA/RRAGA, RagB/RRAGB, RagC/RRAGC and/or RagD/RRAGD); promoting its recruitment to lysosomal membrane in the presence of nutrients. Interacts with ACSS2. Phosphorylation at Ser-211 by MTOR via non-canonical mTORC1 pathway regulates its subcellular location and activity. When nutrients are present, phosphorylation by MTOR promotes association with 14-3-3/YWHA adapters and retention in the cytosol. Inhibition of mTORC1, starvation and lysosomal disruption, promotes dephosphorylation by calcineurin PPP3CB and translocation to the nucleus. Dephosphorylated by calcineurin PPP3CB in response to lysosomal Ca(2+) release. IRGM promotes dephosphorylation by calcineurin PPP3CB, resulting in TFEB nuclear translocation and stimulation of lysosomal biogenesis. Dephosphorylated by phosphatase PPP3CA following Coxsackievirus B3 infection, leading to nuclear translocation. Exported from the nucleus in a mTORC1-dependent manner in response to nutrient availability. Post-translationally, alkylated via a non-enzymatic covalent modification. Itaconate, an anti-inflammatory metabolite generated in response to lipopolysaccharide, alkylates Cys-212, preventing association with 14-3-3/YWHA adapters, thereby promoting nuclear translocation and activity. In terms of processing, sumoylated; does not affect dimerization with MITF. (Microbial infection) Cleavage by Coxsackievirus B3 protease 3C after site Gln-60. This non-phosphorylated cleavage product retains its ability to interact with TFEB, TFE3 or MITF and presents impaired transcriptional activity, resulting in disruption of lysosomal functions and increased viral infection.

The protein resides in the nucleus. The protein localises to the cytoplasm. It localises to the cytosol. Its subcellular location is the lysosome membrane. Its activity is regulated as follows. Inhibited by eltrombopag drug, which binds to the bHLH domain and disrupts DNA-binding. Its function is as follows. Transcription factor that acts as a master regulator of lysosomal biogenesis, autophagy, lysosomal exocytosis, lipid catabolism, energy metabolism and immune response. Specifically recognizes and binds E-box sequences (5'-CANNTG-3'); efficient DNA-binding requires dimerization with itself or with another MiT/TFE family member such as TFE3 or MITF. Involved in the cellular response to amino acid availability by acting downstream of MTOR: in the presence of nutrients, TFEB phosphorylation by MTOR promotes its cytosolic retention and subsequent inactivation. Upon starvation or lysosomal stress, inhibition of MTOR induces TFEB dephosphorylation, resulting in nuclear localization and transcription factor activity. Specifically recognizes and binds the CLEAR-box sequence (5'-GTCACGTGAC-3') present in the regulatory region of many lysosomal genes, leading to activate their expression, thereby playing a central role in expression of lysosomal genes. Regulates lysosomal positioning in response to nutrient deprivation by promoting the expression of PIP4P1. Acts as a positive regulator of autophagy by promoting expression of genes involved in autophagy. In association with TFE3, activates the expression of CD40L in T-cells, thereby playing a role in T-cell-dependent antibody responses in activated CD4(+) T-cells and thymus-dependent humoral immunity. Specifically recognizes the gamma-E3 box, a subset of E-boxes, present in the heavy-chain immunoglobulin enhancer. Plays a role in the signal transduction processes required for normal vascularization of the placenta. Involved in the immune response to infection by the bacteria S.aureus, S.typhimurium or S.enterica: infection promotes itaconate production, leading to alkylation, resulting in nuclear localization and transcription factor activity. Itaconate-mediated alkylation activates TFEB-dependent lysosomal biogenesis, facilitating the bacteria clearance during the antibacterial innate immune response. In association with ACSS2, promotes the expression of genes involved in lysosome biogenesis and both autophagy upon glucose deprivation. This chain is Transcription factor EB, found in Homo sapiens (Human).